The sequence spans 312 residues: Acetyl-coenzyme A carboxylase carboxyl transferase subunit alpha (312 aa).

Residues 36–286 (NLEKEISKTY…ADYVKKSLNE (251 aa)) enclose the CoA carboxyltransferase C-terminal domain.

The protein belongs to the AccA family. As to quaternary structure, acetyl-CoA carboxylase is a heterohexamer composed of biotin carboxyl carrier protein (AccB), biotin carboxylase (AccC) and two subunits each of ACCase subunit alpha (AccA) and ACCase subunit beta (AccD).

The protein resides in the cytoplasm. It carries out the reaction N(6)-carboxybiotinyl-L-lysyl-[protein] + acetyl-CoA = N(6)-biotinyl-L-lysyl-[protein] + malonyl-CoA. It functions in the pathway lipid metabolism; malonyl-CoA biosynthesis; malonyl-CoA from acetyl-CoA: step 1/1. Functionally, component of the acetyl coenzyme A carboxylase (ACC) complex. First, biotin carboxylase catalyzes the carboxylation of biotin on its carrier protein (BCCP) and then the CO(2) group is transferred by the carboxyltransferase to acetyl-CoA to form malonyl-CoA. The chain is Acetyl-coenzyme A carboxylase carboxyl transferase subunit alpha from Campylobacter jejuni subsp. doylei (strain ATCC BAA-1458 / RM4099 / 269.97).